The sequence spans 428 residues: Serine--tRNA ligase (428 aa).

Position 231-233 (threonine 231–glutamate 233) interacts with L-serine. Arginine 262–glutamate 264 lines the ATP pocket. An L-serine-binding site is contributed by glutamate 285. Glutamate 349–serine 352 is an ATP binding site. Serine 385 serves as a coordination point for L-serine.

The protein belongs to the class-II aminoacyl-tRNA synthetase family. Type-1 seryl-tRNA synthetase subfamily. Homodimer. The tRNA molecule binds across the dimer.

It localises to the cytoplasm. It catalyses the reaction tRNA(Ser) + L-serine + ATP = L-seryl-tRNA(Ser) + AMP + diphosphate + H(+). It carries out the reaction tRNA(Sec) + L-serine + ATP = L-seryl-tRNA(Sec) + AMP + diphosphate + H(+). It participates in aminoacyl-tRNA biosynthesis; selenocysteinyl-tRNA(Sec) biosynthesis; L-seryl-tRNA(Sec) from L-serine and tRNA(Sec): step 1/1. Its function is as follows. Catalyzes the attachment of serine to tRNA(Ser). Is also able to aminoacylate tRNA(Sec) with serine, to form the misacylated tRNA L-seryl-tRNA(Sec), which will be further converted into selenocysteinyl-tRNA(Sec). This is Serine--tRNA ligase from Methylorubrum extorquens (strain PA1) (Methylobacterium extorquens).